Consider the following 240-residue polypeptide: Phosducin-like protein 3 (240 aa).

Met-1 is modified (N-acetylmethionine). The 155-residue stretch at 27–181 (KELEEEEAEK…EGDIKAQFIG (155 aa)) folds into the Phosducin domain. Phosphoserine occurs at positions 44, 65, 235, and 237. A thioredoxin fold region spans residues 92-240 (FGEVLEISGK…MRRDSDSEDD (149 aa)).

Belongs to the phosducin family. Interacts (via thioredoxin fold region) with KDR/VEGFR2 (via juxtamembrane domain). Forms ternary complexes with the chaperonin CCT complex and actin substrate, leading to inhibition of actin folding. Interacts with XIAP (via BIR 3 and RING domain). Interacts with HSP90AA1 and HSP90AB1. N-terminal methionine acetylation destabilizes the protein. As to expression, expressed in blood vessels (at protein level).

The protein localises to the cytoplasm. The protein resides in the perinuclear region. It localises to the endoplasmic reticulum. Functionally, acts as a chaperone for the angiogenic VEGF receptor KDR/VEGFR2, increasing its abundance by inhibiting its ubiquitination and degradation. Inhibits the folding activity of the chaperonin-containing T-complex (CCT) which leads to inhibition of cytoskeletal actin folding. Acts as a chaperone during heat shock alongside HSP90 and HSP40/70 chaperone complexes. Modulates the activation of caspases during apoptosis. This is Phosducin-like protein 3 (Pdcl3) from Mus musculus (Mouse).